The sequence spans 158 residues: MAEQSTKSVLFVCLGNICRSPIAEAVFRKLVTDQNISENWRVDSAATSGYEIGNPPDYRGQSCMKRHGIPMSHVARQITREDFATFDYILCMDESNLRDLNRKSNQVKTCKAKIELLGSYDPQKQLIIEDPYYGNDSDFETVYQQCVRCCRAFLEKAH.

At Ala2 the chain carries N-acetylalanine. Cys13 serves as the catalytic Nucleophile. The active site involves Arg19. Asp130 (proton donor) is an active-site residue. Residues Tyr132 and Tyr133 each carry the phosphotyrosine modification.

It belongs to the low molecular weight phosphotyrosine protein phosphatase family. In terms of assembly, interacts with EPHA2; dephosphorylates EPHA2. Interacts with EPHB1. Interacts with the SH3 domain of SPTAN1. Post-translationally, phosphorylated by LCK. Phosphorylation at Tyr-132 increases its phosphatase activity.

It is found in the cytoplasm. It catalyses the reaction O-phospho-L-tyrosyl-[protein] + H2O = L-tyrosyl-[protein] + phosphate. It carries out the reaction a phosphate monoester + H2O = an alcohol + phosphate. With respect to regulation, inhibited by sulfhydryl reagents. Functionally, acts on tyrosine phosphorylated proteins, low-MW aryl phosphates and natural and synthetic acyl phosphates with differences in substrate specificity between isoform 1 and isoform 2. This is Low molecular weight phosphotyrosine protein phosphatase (ACP1) from Pongo abelii (Sumatran orangutan).